We begin with the raw amino-acid sequence, 499 residues long: Lysine--tRNA ligase (499 aa).

Residues E408 and E415 each coordinate Mg(2+).

This sequence belongs to the class-II aminoacyl-tRNA synthetase family. As to quaternary structure, homodimer. Mg(2+) serves as cofactor.

The protein resides in the cytoplasm. The enzyme catalyses tRNA(Lys) + L-lysine + ATP = L-lysyl-tRNA(Lys) + AMP + diphosphate. This chain is Lysine--tRNA ligase, found in Agrobacterium fabrum (strain C58 / ATCC 33970) (Agrobacterium tumefaciens (strain C58)).